A 289-amino-acid chain; its full sequence is Probable protein phosphatase 2C 39 (289 aa).

Positions 41 to 288 (THGFHLVKGK…DDISVVVVKF (248 aa)) constitute a PPM-type phosphatase domain. Mn(2+) is bound by residues aspartate 78, glycine 79, aspartate 240, and aspartate 279.

The protein belongs to the PP2C family. Mg(2+) serves as cofactor. Requires Mn(2+) as cofactor.

It catalyses the reaction O-phospho-L-seryl-[protein] + H2O = L-seryl-[protein] + phosphate. It carries out the reaction O-phospho-L-threonyl-[protein] + H2O = L-threonyl-[protein] + phosphate. This is Probable protein phosphatase 2C 39 from Arabidopsis thaliana (Mouse-ear cress).